The following is a 354-amino-acid chain: Guanine nucleotide-binding protein alpha-3 subunit (354 aa).

Gly-2 carries N-myristoyl glycine lipidation. Residue Cys-4 is the site of S-palmitoyl cysteine attachment. Residues 33–354 form the G-alpha domain; sequence KECKILLLGS…TNALKDSGIL (322 aa). Residues 36–49 form a G1 motif region; the sequence is KILLLGSGESGKST. GTP contacts are provided by residues 41 to 48, 177 to 183, 202 to 206, 271 to 274, and Ala-326; these read GSGESGKS, LRARSKT, DVGGQ, and NKID. 2 residues coordinate Mg(2+): Ser-48 and Thr-183. The interval 175–183 is G2 motif; that stretch reads DVLRARSKT. Residues 198 to 207 are G3 motif; sequence IHLFDVGGQR. Residues 267 to 274 are G4 motif; the sequence is ILFLNKID. The G5 motif stretch occupies residues 324-329; the sequence is TQATDT.

Belongs to the G-alpha family. In terms of assembly, g proteins are composed of 3 units; alpha, beta and gamma. The alpha chain contains the guanine nucleotide binding site.

Guanine nucleotide-binding proteins (G proteins) are involved as modulators or transducers in various transmembrane signaling systems. GPA3 plays an active role in transmission of the pheromone signal. In Mycosarcoma maydis (Corn smut fungus), this protein is Guanine nucleotide-binding protein alpha-3 subunit (GPA3).